A 22-amino-acid chain; its full sequence is Caerin-3.5 (22 aa).

Lysine 22 is subject to Lysine amide.

Expressed by the skin dorsal glands.

Its subcellular location is the secreted. In terms of biological role, shows significant activity against Gram-positive organisms, but is less effective against Gram-negative organisms. This is Caerin-3.5 from Ranoidea gracilenta (Dainty green tree frog).